Reading from the N-terminus, the 256-residue chain is CCAAT/enhancer-binding protein delta (256 aa).

Serine 2 is modified (N-acetylserine). 3 disordered regions span residues 18-40, 92-121, and 139-206; these read TAEPAAFYEPGRAGKPGRGAEPA, GGPARLGGPGPAPRPLKREPDWGDGDAPGS, and AAAQ…NQEM. A Glycyl lysine isopeptide (Lys-Gly) (interchain with G-Cter in SUMO) cross-link involves residue lysine 108. Residues 143–162 are compositionally biased toward pro residues; sequence PTPPASPEPPRRSPAPPAPG. Positions 164-188 are enriched in basic and acidic residues; it reads ARDKAAGKRGPDRGSPEYRQRRERN. Residues 178-241 form the bZIP domain; sequence SPEYRQRRER…AGLRRFFKQL (64 aa). Positions 182-209 are basic motif; sequence RQRRERNNIAVRKSRDKAKRRNQEMQQK. The interval 213-241 is leucine-zipper; the sequence is LSAENEKLQQRVEQLTRDLAGLRRFFKQL.

This sequence belongs to the bZIP family. C/EBP subfamily. In terms of assembly, binds DNA as a homodimer and as a heterodimer. Can form stable heterodimers with CEBPB. Can form stable heterodimers with CEBPA and CEBPE. Directly interacts with SPI1/PU.1; this interaction does not affect DNA-binding properties of each partner. Interacts with PRDM16.

It is found in the nucleus. In terms of biological role, transcription activator that recognizes two different DNA motifs: the CCAAT homology common to many promoters and the enhanced core homology common to many enhancers. Important transcription factor regulating the expression of genes involved in immune and inflammatory responses. Transcriptional activator that enhances IL6 transcription alone and as heterodimer with CEBPB. This is CCAAT/enhancer-binding protein delta (CEBPD) from Bos taurus (Bovine).